Reading from the N-terminus, the 268-residue chain is Phosphate import ATP-binding protein PstB 2 (268 aa).

Residues 22 to 263 form the ABC transporter domain; the sequence is MALTGVNFYY…PKVKRTEDYI (242 aa). An ATP-binding site is contributed by 54-61; the sequence is GPSGCGKS.

It belongs to the ABC transporter superfamily. Phosphate importer (TC 3.A.1.7) family. The complex is composed of two ATP-binding proteins (PstB), two transmembrane proteins (PstC and PstA) and a solute-binding protein (PstS).

It localises to the cell inner membrane. The enzyme catalyses phosphate(out) + ATP + H2O = ADP + 2 phosphate(in) + H(+). Part of the ABC transporter complex PstSACB involved in phosphate import. Responsible for energy coupling to the transport system. The protein is Phosphate import ATP-binding protein PstB 2 of Rhizobium johnstonii (strain DSM 114642 / LMG 32736 / 3841) (Rhizobium leguminosarum bv. viciae).